Consider the following 701-residue polypeptide: Elongation factor G (701 aa).

The 277-residue stretch at 10–286 folds into the tr-type G domain; it reads NKVRNIGIMA…AVIDYLPSPL (277 aa). Residues 19 to 26, 83 to 87, and 137 to 140 contribute to the GTP site; these read AHIDAGKT, DTPGH, and NKMD.

The protein belongs to the TRAFAC class translation factor GTPase superfamily. Classic translation factor GTPase family. EF-G/EF-2 subfamily.

The protein resides in the cytoplasm. Its function is as follows. Catalyzes the GTP-dependent ribosomal translocation step during translation elongation. During this step, the ribosome changes from the pre-translocational (PRE) to the post-translocational (POST) state as the newly formed A-site-bound peptidyl-tRNA and P-site-bound deacylated tRNA move to the P and E sites, respectively. Catalyzes the coordinated movement of the two tRNA molecules, the mRNA and conformational changes in the ribosome. The chain is Elongation factor G from Mycobacteroides abscessus (strain ATCC 19977 / DSM 44196 / CCUG 20993 / CIP 104536 / JCM 13569 / NCTC 13031 / TMC 1543 / L948) (Mycobacterium abscessus).